The chain runs to 299 residues: Tricarboxylate transport protein (299 aa).

Solcar repeat units follow at residues 10–97, 109–199, and 212–297; these read VDPL…IKDM, TRGV…IKTL, and LSSG…VLVM. 6 consecutive transmembrane segments (helical) span residues 16–36, 66–86, 113–133, 174–193, 215–235, and 272–291; these read FLAGSLAGAAEACITYPFEFA, IGSIYVGCPAFIIGNTAKAGI, IAGLGAGLLESVAAVTPFEAI, GVLPVSMRQAANQAVRLGCY, GLTFLVGAFSGIVTVYSTMPL, and GATPRLGRLVLSGGIVFTIY.

This sequence belongs to the mitochondrial carrier (TC 2.A.29) family.

The protein localises to the mitochondrion inner membrane. In terms of biological role, transport of citrate across inner mitochondrial membrane. This Saccharomyces cerevisiae (strain ATCC 204508 / S288c) (Baker's yeast) protein is Tricarboxylate transport protein (CTP1).